The sequence spans 332 residues: Probable cytosolic iron-sulfur protein assembly protein 1 (332 aa).

WD repeat units follow at residues 9-48 (GHTD…LVTT), 52-93 (GHNR…WQFL), 98-137 (GHEN…DEFE), 144-183 (DHTQ…WICV), 188-230 (GHES…GGTG), 257-295 (AHTR…QWVV), and 302-332 (AHGV…IWEV).

Belongs to the WD repeat CIA1 family. In terms of assembly, interacts with NAR1.

The protein resides in the cytoplasm. Its subcellular location is the nucleus. In terms of biological role, essential component of the cytosolic iron-sulfur (Fe/S) protein assembly machinery. Required for the maturation of extramitochondrial Fe/S proteins. The sequence is that of Probable cytosolic iron-sulfur protein assembly protein 1 from Yarrowia lipolytica (strain CLIB 122 / E 150) (Yeast).